We begin with the raw amino-acid sequence, 446 residues long: NADH-ubiquinone oxidoreductase chain 4 (446 aa).

13 helical membrane passes run 4–24 (IILFLLFLTPVCFINNMYWMV), 56–76 (MLSYGLVLLSLWICSLMLLAS), 93–113 (IVILLLLLVLTFSSMSLFMFY), 114–134 (LFFESSLIPTLFLILGWGYQP), 141–161 (VYLLFYTLLVSLPMLIGIFYV), 182–202 (LLYFCLLCAFLVKMPMFLVHL), 212–232 (PVSGSMILAGIMLKLGGYGLL), 245–265 (YSFVWISISLVGGVLMSLVCL), 272–292 (ALIAYSSVAHMGIVLAGLLTM), 297–317 (LCGSYTLMIAHGLCSSGLFCL), 330–350 (MLINKGLLNFMPAMTLWWFLL), 373–393 (IVSWSWISMIMLSFLSFFSAA), and 426–446 (LLHWLPLNLLILKSESCILWL).

Belongs to the complex I subunit 4 family.

The protein localises to the mitochondrion membrane. It catalyses the reaction a ubiquinone + NADH + 5 H(+)(in) = a ubiquinol + NAD(+) + 4 H(+)(out). In terms of biological role, core subunit of the mitochondrial membrane respiratory chain NADH dehydrogenase (Complex I) that is believed to belong to the minimal assembly required for catalysis. Complex I functions in the transfer of electrons from NADH to the respiratory chain. The immediate electron acceptor for the enzyme is believed to be ubiquinone. In Drosophila yakuba (Fruit fly), this protein is NADH-ubiquinone oxidoreductase chain 4 (mt:ND4).